We begin with the raw amino-acid sequence, 109 residues long: METLDKIKKQISENPILIYMKGSPKFPSCGFSARAVEALMHCKVPFGYVDILQHPDIRAELPAYANWPTFPQLWVDGELVGGCDIILEMFQQGELQTLLADVAAKYPQE.

Positions 4–106 (LDKIKKQISE…TLLADVAAKY (103 aa)) constitute a Glutaredoxin domain. K21 contacts glutathione. Residue C29 coordinates [2Fe-2S] cluster. Residues R58, F70, and 83-84 (CD) each bind glutathione.

The protein belongs to the glutaredoxin family. Monothiol subfamily. Homodimer.

It is found in the cytoplasm. Functionally, monothiol glutaredoxin involved in the biogenesis of iron-sulfur clusters. The protein is Glutaredoxin 4 (grxD) of Pasteurella multocida (strain Pm70).